A 449-amino-acid polypeptide reads, in one-letter code: MTRLFGTDGVRGLAGRDLTAGLTLELAIAAAEVLPERGIPGKRPRAVVGRDPRASGEFLEAAVVAGLASAGVDVIRLGVLPTPAVAFLTGELDADFGVMLSASHNPAPDNGIKFFARGGHKLSDEVEDEIERRLGRAVAGATGRDVGRVTDDTDSVERYITHLVNSLPNRLDGLKVVVDCANGAAAGIAPEALRRAGADVIAIGDKPDGFNINEGCGSTNLDALRAAVLEHGADAGIAHDGDADRCQAVAADGSVVDGDQIMAVLALELYEANALHNNTLVVTVMSNLGLKLAMKEAGITLVETQVGDRYVLEAMRAGSYSLGGEQSGHIILLDHATTGDGLLTGMHLLAAVNRRGVALAELAKVMNRLPQVLVNVSGVDKTRVATSERIAAEVAAAEAELGDSGRVLLRPSGTEPIVRVMVEATSQDRAQAIADRLADVVRDELSINA.

The Phosphoserine intermediate role is filled by Ser103. The Mg(2+) site is built by Ser103, Asp240, Asp242, and Asp244. A Phosphoserine modification is found at Ser103.

The protein belongs to the phosphohexose mutase family. Requires Mg(2+) as cofactor. Post-translationally, activated by phosphorylation.

It catalyses the reaction alpha-D-glucosamine 1-phosphate = D-glucosamine 6-phosphate. Its function is as follows. Catalyzes the conversion of glucosamine-6-phosphate to glucosamine-1-phosphate. The sequence is that of Phosphoglucosamine mutase from Thermobifida fusca (strain YX).